The following is an 83-amino-acid chain: uncharacterized protein (83 aa).

Its subcellular location is the plastid. It is found in the chloroplast. This is an uncharacterized protein from Pinus thunbergii (Japanese black pine).